The primary structure comprises 618 residues: Matrix metalloproteinase-24 (618 aa).

The signal sequence occupies residues 1-41; the sequence is MPRSRGGRAAPGQAARWSGWRAPGRLLPLLPALCCLAAAAG. The propeptide occupies 42–128; it reads AGKPAGADAP…HLSRRRRNKR (87 aa). Over 42–575 the chain is Extracellular; that stretch reads AGKPAGADAP…IDDVPGSVNA (534 aa). Positions 110–117 match the Cysteine switch motif; sequence PRCGVPDH. Residues Cys112 and His255 each coordinate Zn(2+). The active site involves Glu256. 2 residues coordinate Zn(2+): His259 and His265. Residues 296–352 are disordered; sequence QKIYGPPAEPLEPTRPLPTLPVRRIHSPSERKHERQPRPPRPPLGDRPSTPGAKPNI. Over residues 302–314 the composition is skewed to pro residues; the sequence is PAEPLEPTRPLPT. A compositionally biased stretch (basic and acidic residues) spans 322 to 332; sequence SPSERKHERQP. 4 Hemopexin repeats span residues 350 to 398, 399 to 444, 446 to 494, and 495 to 542; these read PNIC…WKGL, PARI…GSCL, REGI…KGIP, and QAPQ…WMGC. Cys353 and Cys542 are joined by a disulfide. Residues 576-596 form a helical membrane-spanning segment; the sequence is VAVVVPCTLSLCLLVLLYTIF. Over 597–618 the chain is Cytoplasmic; the sequence is QFKNKTGPQPVTYYKRPVQEWV. A PDZ-binding motif is present at residues 616-618; the sequence is EWV.

It belongs to the peptidase M10A family. In terms of assembly, interacts (via PDZ-binding motif) with APBA3 (via PDZ domain). Interacts with GRIP1 and GRIP2. The cofactor is Zn(2+). Ca(2+) is required as a cofactor. In terms of processing, cleaved by a furin endopeptidase in the trans-Golgi network. Predominantly expressed in the nervous system: while enriched in the central nervous system, expression is also detected in the peripheral nervous system, including the trigeminal ganglion. Expression is not restricted to the nervous system: it is also enriched in the thymus, with a lower level of expression present in the aorta. In brain, high expression is present in the brain parenchyma, particularly within the neocortex.

Its subcellular location is the cell membrane. It is found in the golgi apparatus. The protein resides in the trans-Golgi network membrane. The protein localises to the secreted. It localises to the extracellular space. Its subcellular location is the extracellular matrix. Metalloprotease that mediates cleavage of N-cadherin (CDH2) and acts as a regulator of neuro-immune interactions and neural stem cell quiescence. Involved in cell-cell interactions between nociceptive neurites and mast cells, possibly by mediating cleavage of CDH2, thereby acting as a mediator of peripheral thermal nociception and inflammatory hyperalgesia. Key regulator of neural stem cells quiescence by mediating cleavage of CDH2, affecting CDH2-mediated anchorage of neural stem cells to ependymocytes in the adult subependymal zone, leading to modulate their quiescence. May play a role in axonal growth. Able to activate progelatinase A. May also be a proteoglycanase involved in degradation of proteoglycans, such as dermatan sulfate and chondroitin sulfate proteoglycans. Cleaves partially fibronectin, but not collagen type I, nor laminin. This chain is Matrix metalloproteinase-24 (Mmp24), found in Rattus norvegicus (Rat).